Reading from the N-terminus, the 97-residue chain is Nucleoid-associated protein HPP12_0031 (97 aa).

This sequence belongs to the YbaB/EbfC family. Homodimer.

The protein localises to the cytoplasm. It is found in the nucleoid. Its function is as follows. Binds to DNA and alters its conformation. May be involved in regulation of gene expression, nucleoid organization and DNA protection. The protein is Nucleoid-associated protein HPP12_0031 of Helicobacter pylori (strain P12).